Here is a 282-residue protein sequence, read N- to C-terminus: L-allo-isoleucyltransferase (282 aa).

Residue Cys-105 is the Acyl-thioester intermediate of the active site. Positions 169 to 261 (HTQSTYTPSD…DGQHHDFVDG (93 aa)) constitute an AB hydrolase-1 domain.

It belongs to the AB hydrolase superfamily.

It catalyses the reaction holo-[CmaD peptidyl-carrier protein] + L-alloisoleucyl-[CmaA peptidyl-carrier protein] = L-alloisoleucyl-[CmaD peptidyl-carrier protein] + holo-[CmaA peptidyl-carrier protein]. Its function is as follows. Involved in the biosynthesis of the phytotoxin coronatine (COR). Catalyzes the transfer of the aminoacyl group covalently attached to the pantetheinyl arm of CmaA to the holo-pantetheinyl arm of CmaD. During the shuttling process, CmaE generates a covalent-aminoacyl-S-Cys enzyme intermediate by the action of its donor substrate L-aminoacyl-S-CmaA and delivers it to the sulfhydryl group attached to the phosphopantetheinyl arm on CmaD. The polypeptide is L-allo-isoleucyltransferase (Pseudomonas savastanoi pv. glycinea (Pseudomonas syringae pv. glycinea)).